We begin with the raw amino-acid sequence, 189 residues long: Peptide deformylase (189 aa).

2 residues coordinate Fe cation: Cys116 and His159. Glu160 is an active-site residue. His163 contributes to the Fe cation binding site.

This sequence belongs to the polypeptide deformylase family. Requires Fe(2+) as cofactor.

It catalyses the reaction N-terminal N-formyl-L-methionyl-[peptide] + H2O = N-terminal L-methionyl-[peptide] + formate. Functionally, removes the formyl group from the N-terminal Met of newly synthesized proteins. Requires at least a dipeptide for an efficient rate of reaction. N-terminal L-methionine is a prerequisite for activity but the enzyme has broad specificity at other positions. The protein is Peptide deformylase of Limosilactobacillus fermentum (strain NBRC 3956 / LMG 18251) (Lactobacillus fermentum).